The primary structure comprises 459 residues: Serine protease HTRA3 (459 aa).

A signal peptide spans 1-23; sequence MQARALLPATLAILATLAVLALA. An IGFBP N-terminal domain is found at 27-90; it reads PAAPCPARCD…ECVRGVCRCR (64 aa). Intrachain disulfides connect cysteine 31–cysteine 54, cysteine 35–cysteine 56, cysteine 40–cysteine 57, cysteine 45–cysteine 60, cysteine 68–cysteine 82, cysteine 76–cysteine 87, cysteine 89–cysteine 107, and cysteine 96–cysteine 132. In terms of domain architecture, Kazal-like spans 76–134; that stretch reads CGDSLECVRGVCRCRWTHTVCGTDGHTYADVCALQAASRRALQVSGTPVRQLQKGACPS. A serine protease region spans residues 181-347; that stretch reads GSGFIMSEAG…IPSDRITRFL (167 aa). Active-site charge relay system residues include histidine 197, aspartate 233, and serine 311. The PDZ domain maps to 365 to 450; the sequence is IRMRTITPSL…EVRRGNDDLL (86 aa).

It belongs to the peptidase S1C family. Homotrimer. Interacts with MYH9. Interacts with TGFB1; the interaction inhibits TGFB-mediated signaling. Interacts with BMP4; the interaction inhibits BMP4-mediated signaling. Interacts with TGFB2 and GDF5. Highest level of isoform 1 in maternal part of the placenta, moderate level in heart, testis and ovary, low level in muscle and lung. High expression found in granulosa cells of the ovary. Expressed in bone matrix, particularly in articular chondrocytes. Very low level of isoform 2 expressed in placenta. Expressed in the bone matrix, particularly in articular chondrocytes.

The protein localises to the secreted. Functionally, serine protease that cleaves beta-casein/CSN2 as well as several extracellular matrix (ECM) proteoglycans such as decorin/DCN, biglycan/BGN and fibronectin/FN1. Inhibits signaling mediated by TGF-beta family proteins possibly indirectly by degradation of these ECM proteoglycans. May act as a tumor suppressor. Negatively regulates, in vitro, trophoblast invasion during placental development and may be involved in the development of the placenta in vivo. May also have a role in ovarian development, granulosa cell differentiation and luteinization. The sequence is that of Serine protease HTRA3 (Htra3) from Mus musculus (Mouse).